Reading from the N-terminus, the 1250-residue chain is Bifunctional autolysin (1250 aa).

Positions 1-29 (MAKKFNYKLPSMVALTLVGSAVTAHQVQA) are cleaved as a signal peptide. Polar residues predominate over residues 103–138 (GDTRANQSATTNNTQPVAKSTSTTAPKTNTNVTNAG). Disordered stretches follow at residues 103–151 (GDTR…NSEN) and 173–219 (AAAP…KYKP). Low complexity predominate over residues 173–196 (AAAPKAATTSAPKAKTEATPKVTT). The tract at residues 199-769 (ASAQPRSVAA…AVAQPKTAVK (571 aa)) is N-acetylmuramoyl-L-alanine amidase. GW domains follow at residues 437 to 511 (TVAA…YNTA), 513 to 587 (SPVN…DTAK), 606 to 680 (TVSS…YNNA), 682 to 756 (SPVN…VPAA), 778 to 853 (TTQT…VQNL), 855 to 930 (KEVK…APTA), and 937 to 1011 (AAKD…KELI). The interval 770–1250 (AYTVTKPQTT…GKYFDIPQYK (481 aa)) is endo-beta-N-acetylglucosaminidase.

The protein in the N-terminal section; belongs to the N-acetylmuramoyl-L-alanine amidase 2 family. This sequence in the C-terminal section; belongs to the glycosyl hydrolase 73 family. In terms of assembly, oligomer; forms a ring structure at the cell surface which is important for efficient partitioning of daughter cells after cell division. Undergoes proteolytic processing to generate the two extracellular lytic enzymes, probably at the septal region on the cell surface.

It is found in the secreted. It carries out the reaction Hydrolyzes the link between N-acetylmuramoyl residues and L-amino acid residues in certain cell-wall glycopeptides.. The catalysed reaction is an N(4)-(oligosaccharide-(1-&gt;3)-[oligosaccharide-(1-&gt;6)]-beta-D-Man-(1-&gt;4)-beta-D-GlcNAc-(1-&gt;4)-alpha-D-GlcNAc)-L-asparaginyl-[protein] + H2O = an oligosaccharide-(1-&gt;3)-[oligosaccharide-(1-&gt;6)]-beta-D-Man-(1-&gt;4)-D-GlcNAc + N(4)-(N-acetyl-beta-D-glucosaminyl)-L-asparaginyl-[protein]. Endohydrolysis of the di-N-acetylchitobiosyl unit in high-mannose glycopeptides and glycoproteins containing the -[(Man)5(GlcNAc)2]-Asn structure. One N-acetyl-D-glucosamine residue remains attached to the protein; the rest of the oligosaccharide is released intact. Cleaves the peptidoglycan connecting the daughter cells at the end of the cell division cycle, resulting in the separation of the two newly divided cells. Acts as an autolysin in penicillin-induced lysis. The protein is Bifunctional autolysin (atl) of Staphylococcus aureus (strain MSSA476).